Reading from the N-terminus, the 718-residue chain is Homeobox-leucine zipper protein HDG9 (718 aa).

The span at 1–12 (MDFTRDDNSSDE) shows a compositional bias: basic and acidic residues. The interval 1-35 (MDFTRDDNSSDERENDVDANTNNRHEKKGYHRHTN) is disordered. The segment at residues 26–85 (EKKGYHRHTNEQIHRLETYFKECPHPDEFQRRLLGEELNLKPKQIKFWFQNKRTQAKSHN) is a DNA-binding region (homeobox). The stretch at 78–152 (RTQAKSHNEK…LKDEYERVSN (75 aa)) forms a coiled coil. The interval 169 to 209 (PYLHGPSNHASTSKNRPALYGTSSNRLPEPSSIFRGPYTRG) is disordered. Residues 176–194 (NHASTSKNRPALYGTSSNR) are compositionally biased toward polar residues. An START domain is found at 232–464 (SQLEKIAMLE…LERTCERLIF (233 aa)).

It belongs to the HD-ZIP homeobox family. Class IV subfamily. As to expression, expressed in anthers with highest levels in the tapetum and pollen grains, and chalazal end of the embryo sac.

The protein localises to the nucleus. In terms of biological role, probable transcription factor that binds to the DNA sequence 5'-GCATTAAATGCGCA-3'. The protein is Homeobox-leucine zipper protein HDG9 (HDG9) of Arabidopsis thaliana (Mouse-ear cress).